An 874-amino-acid polypeptide reads, in one-letter code: Interleukin-12 receptor subunit beta-2 (874 aa).

Residues 1–23 form the signal peptide; it reads MAQTVRECSLALLFLFMWLLIKA. Over 24 to 637 the chain is Extracellular; sequence NIDVCKLGTV…REFCPQGKAN (614 aa). Asparagine 48, asparagine 101, asparagine 114, asparagine 142, asparagine 151, asparagine 169, asparagine 179, asparagine 224, asparagine 252, asparagine 279, asparagine 287, asparagine 323, asparagine 391, and asparagine 495 each carry an N-linked (GlcNAc...) asparagine glycan. Fibronectin type-III domains are found at residues 139–237, 242–335, 336–430, 438–530, and 536–635; these read PPQN…FLDI, PPWD…TPEE, EPVG…NIVD, APHQ…IRGD, and PVSG…PQGK. Positions 321–325 match the WSXWS motif motif; sequence WSNWS. Residues 638–658 traverse the membrane as a helical segment; sequence WKAFVISSICIAIITVGTFSI. Residues 659–874 are Cytoplasmic-facing; the sequence is RYFRQKAFTL…GYDSLMSNEA (216 aa). The Box 1 motif signature appears at 677–685; that stretch reads YSRTIPDPA. Residues tyrosine 757, tyrosine 804, and tyrosine 811 each carry the phosphotyrosine modification.

This sequence belongs to the type I cytokine receptor family. Type 2 subfamily. In terms of assembly, heterodimer/heterooligomer; disulfide-linked. The functional high affinity IL12 receptor is composed of I12RB1 and IL12RB2. Il12RB2 binds JAK2 (via its N-terminal) through a membrane-proximal region of the cytoplasmic domain. Post-translationally, on IL12 stimulation, phosphorylated on C-terminal tyrosine residues. Phosphorylation of any one of Tyr-757, Tyr-804 or Tyr-811 can activate STAT4, IFN-gamma production, and T-cell proliferation. Tyr-811 is the dominant site of cell proliferation. Expressed in developing T-helper (TH) cells.

The protein resides in the membrane. Functionally, receptor for interleukin-12. This subunit is the signaling component coupling to the JAK2/STAT4 pathway. Promotes the proliferation of T-cells as well as NK cells. Induces the promotion of T-cells towards the Th1 phenotype by strongly enhancing IFN-gamma production. Can also activate STAT3. The protein is Interleukin-12 receptor subunit beta-2 (Il12rb2) of Mus musculus (Mouse).